The sequence spans 817 residues: MDRDLEQALDRTENITEIAQQRRPRRRYSPRAGKTLQEKLYDIYVEECGKEPEDPQELRSNVNLLEKLVRRESLPCLLVNLYPGNQGYSVMLQREDGSFAETIRLPYEERALLDYLDAEELPPALGDVLDKASVNIFHSGCVIVEVRDYRQSSNMQPPGYQSRHILLRPTMQTLAPEVKTMTRDGEKWSQEDKFPLESQLILATAEPLCLDPSVAVACTANRLLYNKQKMNTDPMEQCLQRYSWPSVKPQQEQSDCPPPPELRVSTSGQKEERKVGQPCELNITKAGSCVDTWKGRPCDLAVPSEVDVEKLAKGYQSVTAADPQLPVWPAQEVEDPFRHAWEAGCQAWDTKPNIMQSFNDPLLCGKIRPRKKARQKSQKSPWQPFPDDHSACLRPGSETDAGRAVSQAQESVQSKVKGPGKMSHSSSGPASVSQLSSWKTPEQPDPVWVQSSVSGKGEKHPPPRTQLPSSSGKISSGNSFPPQQAGSPLKRPFPAAAPAVAAAAPAPAPAPAAAPALAAAAVAAAAGGAAPSHSQKPSVPLIKASRRRPAAGRPTRFVKIAPAIQVRTGSTGLKATNVEGPVRGAQVLGCSFKPVQAPGSGAPAPAGISGSGLQSSGGPLPDARPGAVQASSPAPLQFFLNTPEGLRPLTLQVPQGWAVLTGPQQQSHQLVSLQQLQQPTAAHPPQPGPQGSTLGLSTQGQAFPAQQLLNVNLTGAGSGLQPQPQAAVLSLLGSAQVPQQGVQLPFVLGQQPQPLLLLQPQPQPQQIQLQTQPLRVLQQPVFLATGAVQIVQPHPGVQAGSQLVGQRKGGKPTPPAP.

A compositionally biased stretch (basic and acidic residues) spans 1 to 14 (MDRDLEQALDRTEN). Disordered stretches follow at residues 1 to 28 (MDRD…RRRY), 249 to 275 (PQQE…ERKV), 369 to 553 (PRKK…AAGR), 598 to 630 (PGSG…AVQA), and 675 to 697 (QLQQ…LGLS). A compositionally biased stretch (polar residues) spans 423–440 (SHSSSGPASVSQLSSWKT). Low complexity-rich tracts occupy residues 469 to 479 (SSSGKISSGNS), 494 to 505 (PAAAPAVAAAAP), 513 to 531 (AAPA…GAAP), and 598 to 618 (PGSG…SSGG).

It belongs to the SPT20 family.

In Homo sapiens (Human), this protein is Transcription factor SPT20 homolog-like 2 (SUPT20HL2).